We begin with the raw amino-acid sequence, 233 residues long: Small ribosomal subunit protein uS3 (233 aa).

The region spanning 39-108 is the KH type-2 domain; sequence IRTALFKLLK…KLIVNVRVIE (70 aa).

Belongs to the universal ribosomal protein uS3 family. As to quaternary structure, part of the 30S ribosomal subunit. Forms a tight complex with proteins S10 and S14.

Functionally, binds the lower part of the 30S subunit head. Binds mRNA in the 70S ribosome, positioning it for translation. The sequence is that of Small ribosomal subunit protein uS3 from Mycoplasma mycoides subsp. mycoides SC (strain CCUG 32753 / NCTC 10114 / PG1).